Consider the following 372-residue polypeptide: Lipoyl synthase, mitochondrial (372 aa).

A mitochondrion-targeting transit peptide spans 1 to 27; sequence MSLRCGGAVRTVGPRVFGRYVFSPVRE. 7 residues coordinate [4Fe-4S] cluster: cysteine 106, cysteine 111, cysteine 117, cysteine 137, cysteine 141, cysteine 144, and serine 352. Residues 122 to 341 form the Radical SAM core domain; sequence EYATATATIM…EKVGNELGFH (220 aa).

The protein belongs to the radical SAM superfamily. Lipoyl synthase family. Requires [4Fe-4S] cluster as cofactor.

It is found in the mitochondrion. It carries out the reaction [[Fe-S] cluster scaffold protein carrying a second [4Fe-4S](2+) cluster] + N(6)-octanoyl-L-lysyl-[protein] + 2 oxidized [2Fe-2S]-[ferredoxin] + 2 S-adenosyl-L-methionine + 4 H(+) = [[Fe-S] cluster scaffold protein] + N(6)-[(R)-dihydrolipoyl]-L-lysyl-[protein] + 4 Fe(3+) + 2 hydrogen sulfide + 2 5'-deoxyadenosine + 2 L-methionine + 2 reduced [2Fe-2S]-[ferredoxin]. The protein operates within protein modification; protein lipoylation via endogenous pathway; protein N(6)-(lipoyl)lysine from octanoyl-[acyl-carrier-protein]: step 2/2. In terms of biological role, catalyzes the radical-mediated insertion of two sulfur atoms into the C-6 and C-8 positions of the octanoyl moiety bound to the lipoyl domains of lipoate-dependent enzymes, thereby converting the octanoylated domains into lipoylated derivatives. This is Lipoyl synthase, mitochondrial from Bos taurus (Bovine).